The sequence spans 377 residues: D-alanine--D-alanine ligase (377 aa).

Positions 140–349 (KELLTVNNIR…NVELVDKLID (210 aa)) constitute an ATP-grasp domain. Residue 170-225 (VKDLGDVVFVKAANQGSSVGVSRAKTADEFEAALTDSFQYDYKVLIEAAVKGPREL) coordinates ATP. The Mg(2+) site is built by Asp303, Glu316, and Asn318.

Belongs to the D-alanine--D-alanine ligase family. Mg(2+) is required as a cofactor. Mn(2+) serves as cofactor.

It is found in the cytoplasm. The catalysed reaction is 2 D-alanine + ATP = D-alanyl-D-alanine + ADP + phosphate + H(+). It functions in the pathway cell wall biogenesis; peptidoglycan biosynthesis. Cell wall formation. The chain is D-alanine--D-alanine ligase from Leuconostoc citreum (strain KM20).